Reading from the N-terminus, the 392-residue chain is O-phospho-L-seryl-tRNA:Cys-tRNA synthase 1 (392 aa).

Pyridoxal 5'-phosphate is bound by residues 85–86 (AR), Asn190, and 213–215 (SGH). At Lys216 the chain carries N6-(pyridoxal phosphate)lysine.

The protein belongs to the SepCysS family. As to quaternary structure, homodimer. Interacts with SepRS. The cofactor is pyridoxal 5'-phosphate.

It catalyses the reaction O-phospho-L-seryl-tRNA(Cys) + hydrogen sulfide + H(+) = L-cysteinyl-tRNA(Cys) + phosphate. Its function is as follows. Converts O-phospho-L-seryl-tRNA(Cys) (Sep-tRNA(Cys)) to L-cysteinyl-tRNA(Cys) (Cys-tRNA(Cys)). This is O-phospho-L-seryl-tRNA:Cys-tRNA synthase 1 from Methanocorpusculum labreanum (strain ATCC 43576 / DSM 4855 / Z).